Reading from the N-terminus, the 310-residue chain is Nucleotide-binding protein MAP_1147 (310 aa).

Residue 30-37 participates in ATP binding; sequence GLSGAGRG. 81-84 provides a ligand contact to GTP; sequence DVRS.

Belongs to the RapZ-like family.

In terms of biological role, displays ATPase and GTPase activities. This chain is Nucleotide-binding protein MAP_1147, found in Mycolicibacterium paratuberculosis (strain ATCC BAA-968 / K-10) (Mycobacterium paratuberculosis).